Consider the following 684-residue polypeptide: MGLPPLQTQPGTFLVALGLCCWLLATANAHNCQHQHPKAHEVVHGVRIQLADSDDDDAAGSSDAAVHSVRRRSVTAEQPLRILLVYDDSVYRLEEEKFNLINDTVLPEAVQFWEQALMVRETKGIIRLNRKCDSTQVYVKNGHTHCIDQCKATTMCGEVQVPNEHLDVCRVCNATGQNCRIDSNTQPGDGIQNADFVFYVSARQTQRCFKGLTVAYAAHCQQEAALDRPIAGHANLCPESISTKPQELQTLISTVKHEILHALGFSVSLYAFFRDDEGRPRTPRKSETGKPFLNEKLQIHQWSNETIRKVVRENWSVRGGHVNKEVDMMVTPRVVAEARAHFDCDKLEGAELEDQGGEGTALTHWEKRILENEAMTGTHTQSPVFSRITLALMEDSGWYRANYSMATPLSWGKGLGCSFAMRSCKDWIQMNHARGRSIHPFCSKVKQDPLQTECTDDRNSVALCNLIRHDYELPKSYQNFDSLQNVKSGEEGFYGGSVSLADHCPYIQEFTWRSKNIIVRGSHCRFVENNPKPEKNFALESYGHGSKCFDHSEAMWEERSCHQTREWQHWGSGCYKYTCFDGRLHILVGNYTYKCSFPGQKLSIRIAANGWLHKGAIMCPPCHELCGSHFAAQGKQCRPGEEADPLNKYPRDNLACGAESRQQRSVAIISAALLLAAGLRLGHS.

A Zn(2+)-binding site is contributed by His257. Glu258 is a catalytic residue. His261 and His364 together coordinate Zn(2+).

The protein belongs to the peptidase M8 family. It depends on Zn(2+) as a cofactor.

It is found in the cytoplasm. Its function is as follows. Essential for the coordination of mitotic progression, and also plays a role in cell migration. In Drosophila pseudoobscura pseudoobscura (Fruit fly), this protein is Leishmanolysin-like peptidase.